The sequence spans 394 residues: Phosphoglycerate kinase (394 aa).

Residues 21 to 23 (DFN), Arg37, 60 to 63 (HLGR), Arg119, and Arg152 each bind substrate. ATP is bound by residues Lys202, Gly293, Glu324, and 350–353 (GGDS).

This sequence belongs to the phosphoglycerate kinase family. As to quaternary structure, monomer.

The protein resides in the cytoplasm. It carries out the reaction (2R)-3-phosphoglycerate + ATP = (2R)-3-phospho-glyceroyl phosphate + ADP. Its pathway is carbohydrate degradation; glycolysis; pyruvate from D-glyceraldehyde 3-phosphate: step 2/5. The sequence is that of Phosphoglycerate kinase from Caldanaerobacter subterraneus subsp. tengcongensis (strain DSM 15242 / JCM 11007 / NBRC 100824 / MB4) (Thermoanaerobacter tengcongensis).